A 183-amino-acid chain; its full sequence is Chromophore lyase CpcT/CpeT 4 (183 aa).

It belongs to the CpcT/CpeT biliprotein lyase family.

In terms of biological role, covalently attaches a chromophore to Cys residue(s) of phycobiliproteins. This Gloeobacter violaceus (strain ATCC 29082 / PCC 7421) protein is Chromophore lyase CpcT/CpeT 4.